A 221-amino-acid chain; its full sequence is Small ribosomal subunit protein uS3 (221 aa).

The 69-residue stretch at 39–107 (IRNYIKEKLY…TVILNIIEVK (69 aa)) folds into the KH type-2 domain.

The protein belongs to the universal ribosomal protein uS3 family. In terms of assembly, part of the 30S ribosomal subunit. Forms a tight complex with proteins S10 and S14.

In terms of biological role, binds the lower part of the 30S subunit head. Binds mRNA in the 70S ribosome, positioning it for translation. The sequence is that of Small ribosomal subunit protein uS3 from Caldanaerobacter subterraneus subsp. tengcongensis (strain DSM 15242 / JCM 11007 / NBRC 100824 / MB4) (Thermoanaerobacter tengcongensis).